The sequence spans 641 residues: Choline O-acetyltransferase (641 aa).

Positions 1–29 (MPILEKTPPKMAAKSPSSEEEPGLPKLPV) are disordered. Ser-17 is modified (phosphoserine). His-335 functions as the Proton acceptor in the catalytic mechanism. Ser-366 is subject to Phosphoserine. CoA contacts are provided by residues 413-425 (GKTFIKQQKCSPD), Ser-451, and Gln-552. Positions 619 to 641 (QSGMGKPLATKEKVTRPSQVHQP) are disordered.

Belongs to the carnitine/choline acetyltransferase family.

It carries out the reaction choline + acetyl-CoA = acetylcholine + CoA. Its function is as follows. Catalyzes the reversible synthesis of acetylcholine (ACh) from acetyl CoA and choline at cholinergic synapses. The sequence is that of Choline O-acetyltransferase (CHAT) from Sus scrofa (Pig).